We begin with the raw amino-acid sequence, 670 residues long: Tripeptidyl-peptidase SED1 (670 aa).

The first 20 residues, 1–20 (MSTMIFMYFIYIVLYASGIA), serve as a signal peptide directing secretion. The propeptide at 21–231 (ANLSYHVHEK…VGLLKNKILS (211 aa)) is removed in mature form. In terms of domain architecture, Peptidase S53 spans 241-669 (LITPDCLRAL…DRMLDLFLQL (429 aa)). Active-site charge relay system residues include Glu318 and Asp322. Residues Asn334, Asn387, Asn488, Asn508, and Asn551 are each glycosylated (N-linked (GlcNAc...) asparagine). Catalysis depends on Ser586, which acts as the Charge relay system. The Ca(2+) site is built by Asp627, Val628, Gly647, and Asp649.

Ca(2+) is required as a cofactor.

It is found in the secreted. The protein localises to the extracellular space. It catalyses the reaction Release of an N-terminal tripeptide from a polypeptide.. In terms of biological role, secreted tripeptidyl-peptidase which degrades proteins at acidic pHs and is involved in virulence. The protein is Tripeptidyl-peptidase SED1 (SED1) of Arthroderma otae (strain ATCC MYA-4605 / CBS 113480) (Microsporum canis).